A 111-amino-acid chain; its full sequence is Universal stress protein B (111 aa).

The next 2 helical transmembrane spans lie at 1–21 (MISTVALFWALCVVCVVNMAR) and 90–110 (FILTSALCGLVVVSLVALMLW).

Belongs to the universal stress protein B family.

The protein resides in the cell inner membrane. This Yersinia pseudotuberculosis serotype O:1b (strain IP 31758) protein is Universal stress protein B.